The primary structure comprises 192 residues: Secreted phosphoprotein 24 (192 aa).

Positions 1-18 are cleaved as a signal peptide; it reads MKWCVLMLALLQSLCCSG. Disulfide bonds link C82–C93 and C106–C124. Residues 124–192 are disordered; the sequence is CGQDSSSSES…RGDSIGNHLE (69 aa). The segment covering 128-137 has biased composition (low complexity); that stretch reads SSSSESSSEE.

Belongs to the SPP2 family. In terms of processing, multiply phosphorylated at serine residues.

The protein resides in the secreted. Could coordinate an aspect of bone turnover. The polypeptide is Secreted phosphoprotein 24 (spp2) (Oncorhynchus mykiss (Rainbow trout)).